Reading from the N-terminus, the 283-residue chain is Elongation factor Ts (283 aa).

The involved in Mg(2+) ion dislocation from EF-Tu stretch occupies residues 80–83 (TDFV).

The protein belongs to the EF-Ts family.

The protein resides in the cytoplasm. Associates with the EF-Tu.GDP complex and induces the exchange of GDP to GTP. It remains bound to the aminoacyl-tRNA.EF-Tu.GTP complex up to the GTP hydrolysis stage on the ribosome. This chain is Elongation factor Ts, found in Enterobacter sp. (strain 638).